A 150-amino-acid chain; its full sequence is Deoxyuridine 5'-triphosphate nucleotidohydrolase (150 aa).

Substrate is bound by residues 69–71 (RSG), asparagine 82, and 86–88 (LID).

The protein belongs to the dUTPase family. The cofactor is Mg(2+).

The catalysed reaction is dUTP + H2O = dUMP + diphosphate + H(+). Its pathway is pyrimidine metabolism; dUMP biosynthesis; dUMP from dCTP (dUTP route): step 2/2. Functionally, this enzyme is involved in nucleotide metabolism: it produces dUMP, the immediate precursor of thymidine nucleotides and it decreases the intracellular concentration of dUTP so that uracil cannot be incorporated into DNA. In Chromobacterium violaceum (strain ATCC 12472 / DSM 30191 / JCM 1249 / CCUG 213 / NBRC 12614 / NCIMB 9131 / NCTC 9757 / MK), this protein is Deoxyuridine 5'-triphosphate nucleotidohydrolase.